Here is a 270-residue protein sequence, read N- to C-terminus: tRNA pseudouridine synthase A (270 aa).

The active-site Nucleophile is the Asp-60. Residues 107-111 form an RNA binding region; that stretch reads FHARF. Substrate is bound at residue Tyr-118. The interaction with tRNA stretch occupies residues 168–172; sequence QCQSR.

This sequence belongs to the tRNA pseudouridine synthase TruA family. In terms of assembly, homodimer.

The catalysed reaction is uridine(38/39/40) in tRNA = pseudouridine(38/39/40) in tRNA. Its function is as follows. Formation of pseudouridine at positions 38, 39 and 40 in the anticodon stem and loop of transfer RNAs. The polypeptide is tRNA pseudouridine synthase A (Escherichia coli O9:H4 (strain HS)).